Consider the following 307-residue polypeptide: GTPase Era (307 aa).

Residues 7–181 (RCGWVALLGP…VKLVKSKLPV (175 aa)) form the Era-type G domain. Positions 15 to 22 (GPPNAGKS) are G1. GTP is bound at residue 15-22 (GPPNAGKS). The interval 41-45 (QTTRN) is G2. The segment at 62–65 (DTPG) is G3. GTP contacts are provided by residues 62–66 (DTPGI) and 130–133 (NKVD). The G4 stretch occupies residues 130 to 133 (NKVD). Residues 160-162 (VSA) are G5. Residues 212 to 290 (LRQELPYSVA…HLELWVKVRE (79 aa)) enclose the KH type-2 domain.

Belongs to the TRAFAC class TrmE-Era-EngA-EngB-Septin-like GTPase superfamily. Era GTPase family. As to quaternary structure, monomer.

Its subcellular location is the cytoplasm. The protein resides in the cell inner membrane. An essential GTPase that binds both GDP and GTP, with rapid nucleotide exchange. Plays a role in 16S rRNA processing and 30S ribosomal subunit biogenesis and possibly also in cell cycle regulation and energy metabolism. The polypeptide is GTPase Era (Nitratidesulfovibrio vulgaris (strain DSM 19637 / Miyazaki F) (Desulfovibrio vulgaris)).